Consider the following 159-residue polypeptide: Ribosome maturation factor RimP (159 aa).

The protein belongs to the RimP family.

It is found in the cytoplasm. Required for maturation of 30S ribosomal subunits. The sequence is that of Ribosome maturation factor RimP from Geobacter metallireducens (strain ATCC 53774 / DSM 7210 / GS-15).